A 358-amino-acid chain; its full sequence is Sulfate/thiosulfate import ATP-binding protein CysA 1 (358 aa).

Residues 3–237 (IQVENIRKAF…PASAFVYGFL (235 aa)) enclose the ABC transporter domain. 35–42 (GPSGCGKT) serves as a coordination point for ATP.

This sequence belongs to the ABC transporter superfamily. Sulfate/tungstate importer (TC 3.A.1.6) family. As to quaternary structure, the complex is composed of two ATP-binding proteins (CysA), two transmembrane proteins (CysT and CysW) and a solute-binding protein (CysP).

It localises to the cell inner membrane. It catalyses the reaction sulfate(out) + ATP + H2O = sulfate(in) + ADP + phosphate + H(+). The catalysed reaction is thiosulfate(out) + ATP + H2O = thiosulfate(in) + ADP + phosphate + H(+). Functionally, part of the ABC transporter complex CysAWTP involved in sulfate/thiosulfate import. Responsible for energy coupling to the transport system. This Chromobacterium violaceum (strain ATCC 12472 / DSM 30191 / JCM 1249 / CCUG 213 / NBRC 12614 / NCIMB 9131 / NCTC 9757 / MK) protein is Sulfate/thiosulfate import ATP-binding protein CysA 1.